Consider the following 184-residue polypeptide: Protein Syd (184 aa).

It belongs to the Syd family.

The protein localises to the cell inner membrane. In terms of biological role, interacts with the SecY protein in vivo. May bind preferentially to an uncomplexed state of SecY, thus functioning either as a chelating agent for excess SecY in the cell or as a regulatory factor that negatively controls the translocase function. In Photobacterium profundum (strain SS9), this protein is Protein Syd.